The sequence spans 528 residues: Nucleobase-ascorbate transporter 5 (528 aa).

Residues 1-20 (MSAPKSGGDPLPHPPKEQLP) are disordered. 12 consecutive transmembrane segments (helical) span residues 35-55 (AVLLGFQHYLVMLGTTVLIPS), 71-91 (LIQTILFVAGLNTLLQTVFGT), 93-113 (LPAVIGASYTFVPVTISIMLS), 133-153 (TQGALIVASTLQIILGFSGLW), 159-179 (FLSPLSAAPLVGLVGYGLYEL), 181-201 (FPGVAKCIEIGLPGLIILILI), 219-239 (FAVIFSVAIVWLYAFFLTLGG), 285-305 (FAMMMASFVALVESTGAFIAV), 367-387 (AGFMIFFSILGKFGAVFASIP), 390-410 (IIAALYCLFFAYVGAGGLSLL), 418-438 (FRTLFILGFSIFLGLSIPQYF), and 460-479 (MVNVPFSSKAFVGGCVAYLL).

Belongs to the nucleobase:cation symporter-2 (NCS2) (TC 2.A.40) family. In terms of tissue distribution, weakly expressed in the vasculature of developing leaves.

It is found in the membrane. In Arabidopsis thaliana (Mouse-ear cress), this protein is Nucleobase-ascorbate transporter 5 (NAT5).